A 172-amino-acid chain; its full sequence is Nicotinamide-nucleotide adenylyltransferase (172 aa).

It belongs to the archaeal NMN adenylyltransferase family.

The protein resides in the cytoplasm. It catalyses the reaction beta-nicotinamide D-ribonucleotide + ATP + H(+) = diphosphate + NAD(+). The protein operates within cofactor biosynthesis; NAD(+) biosynthesis; NAD(+) from nicotinamide D-ribonucleotide: step 1/1. In Aeropyrum pernix (strain ATCC 700893 / DSM 11879 / JCM 9820 / NBRC 100138 / K1), this protein is Nicotinamide-nucleotide adenylyltransferase.